A 359-amino-acid chain; its full sequence is Protein RecA (359 aa).

An ATP-binding site is contributed by Gly-77–Thr-84.

The protein belongs to the RecA family.

The protein localises to the cytoplasm. Can catalyze the hydrolysis of ATP in the presence of single-stranded DNA, the ATP-dependent uptake of single-stranded DNA by duplex DNA, and the ATP-dependent hybridization of homologous single-stranded DNAs. It interacts with LexA causing its activation and leading to its autocatalytic cleavage. The sequence is that of Protein RecA from Azospirillum lipoferum (strain 4B).